The sequence spans 613 residues: MSSSESASSDEETKRRAPATSDSDSDSDAGPKPGKPLSTDSSASDSDAEKPQAKPAKKKTLTKRKRRATGSSDDDQVDDDLFADKEDKARWKKLTELEKEQEIFERMEARENAIAREEIAQQLAKKAKKSSEKGVKTEKRRKMNSGGSDAGSPKRKASSDSDSEMDAAFHRPSDINRKHKEKNAMDALKNKRKEIEKKNAKNEALSIDAVFGANSGSSSSSSSSESSRSSSSSRESSPERVSEKDKIVKKDVDGLSELRRARLSRHKLSLMIHAPFFDSTVVGCYVRLGQGQMSGSGSKYRIWKIVGVEESNKVYELEGKKTNKIIKCQNGGSERPFRMQFVSNADFEQIEFDEWLLACKRHGNLPTVDIMDKKKQDIEKAINHKYSDKEVDLMIKEKSKYQTVPRNFAMTKANWSKQKELAQQRGDIREAEQIQTKIDEIERQADELEKERSKSISAIAFINHRNRSKIKDQVLSGQLKIEENSQDDPFTRKKGGMRVVSGSKSRLDGTLSASSSTTNLSDGGKDKSSSLAKPTQPPPSTQIKKKTDISSLHDFDLDIDLGKLKDFSTPESSGNKRPSISSSKGVSLSDYRMRRSGGGDAGSSTSAAPSSAV.

Disordered regions lie at residues 1–90 and 121–247; these read MSSS…DKAR and QQLA…KDKI. The segment covering 55–68 has biased composition (basic residues); the sequence is PAKKKTLTKRKRRA. Acidic residues predominate over residues 72–81; that stretch reads SDDDQVDDDL. Residues 167–176 show a composition bias toward basic and acidic residues; the sequence is AAFHRPSDIN. Positions 175–209 form a coiled coil; the sequence is INRKHKEKNAMDALKNKRKEIEKKNAKNEALSIDA. The segment covering 215-235 has biased composition (low complexity); that stretch reads SGSSSSSSSSESSRSSSSSRE. Residues 236-247 are compositionally biased toward basic and acidic residues; it reads SSPERVSEKDKI. The region spanning 252-383 is the Plus3 domain; that stretch reads VDGLSELRRA…KKQDIEKAIN (132 aa). Residues 425–462 are a coiled coil; that stretch reads RGDIREAEQIQTKIDEIERQADELEKERSKSISAIAFI. Disordered stretches follow at residues 485–549 and 564–613; these read SQDD…KTDI and LKDF…SSAV. Over residues 510 to 521 the composition is skewed to low complexity; that stretch reads TLSASSSTTNLS. Positions 569 to 586 are enriched in polar residues; that stretch reads TPESSGNKRPSISSSKGV. A compositionally biased stretch (low complexity) spans 602–613; that stretch reads GSSTSAAPSSAV.

As to quaternary structure, component of the PAF1 complex which consists of at least cdc-73, ctr-9, leo-1, pafo-1 and rtfo-1.

Its subcellular location is the nucleus. Its function is as follows. Component of the PAF1 complex which is a multifunctional complex involved in transcription initiation via genetic interactions with TATA-binding proteins, elongation and transcription-coupled histone modification. This Caenorhabditis elegans protein is RNA polymerase-associated protein RTF1 homolog.